The sequence spans 99 residues: Small integral membrane protein 14 (99 aa).

The Lumenal portion of the chain corresponds to 1-49 (MAEGGFDPCECVCSHEHAMRRLINLLRQSQSYCTDTECLQELPGPSGDN). A helical transmembrane segment spans residues 50–70 (GISVTMILVAWMVIALILFLL). Topologically, residues 71-99 (RPPNLRGSSLPGKPTSPHNGQDPPAPPVD) are cytoplasmic. The disordered stretch occupies residues 78–99 (SSLPGKPTSPHNGQDPPAPPVD).

It localises to the endoplasmic reticulum membrane. The chain is Small integral membrane protein 14 (SMIM14) from Homo sapiens (Human).